We begin with the raw amino-acid sequence, 82 residues long: Omega-conotoxin-like TxMKLT1-031 (82 aa).

The N-terminal stretch at 1–22 is a signal peptide; it reads MKLTCMMIVAVLFLTAWTLVMA. Residues 23 to 49 constitute a propeptide that is removed on maturation; it reads DDSNNGLANLFSKSRDEMEDPEASKLE. 3 disulfides stabilise this stretch: C53/C71, C60/C76, and C70/C81.

Belongs to the conotoxin O1 superfamily. As to expression, expressed by the venom duct.

The protein resides in the secreted. Functionally, omega-conotoxins act at presynaptic membranes, they bind and block voltage-gated calcium channels (Cav). In Conus textile (Cloth-of-gold cone), this protein is Omega-conotoxin-like TxMKLT1-031.